We begin with the raw amino-acid sequence, 86 residues long: Actinorhodin polyketide synthase acyl carrier protein (86 aa).

Residues 4-82 (LLTTDDLRRA…ELLDLINGAL (79 aa)) form the Carrier domain. An O-(pantetheine 4'-phosphoryl)serine modification is found at serine 42.

4'-phosphopantetheine is transferred from CoA to a specific serine of the apo-ACP-like protein.

The protein operates within antibiotic biosynthesis; actinorhodin biosynthesis. Functionally, acyl carrier protein. This Streptomyces coelicolor (strain ATCC BAA-471 / A3(2) / M145) protein is Actinorhodin polyketide synthase acyl carrier protein.